The following is a 195-amino-acid chain: Imidazoleglycerol-phosphate dehydratase (195 aa).

This sequence belongs to the imidazoleglycerol-phosphate dehydratase family.

The protein resides in the cytoplasm. The catalysed reaction is D-erythro-1-(imidazol-4-yl)glycerol 3-phosphate = 3-(imidazol-4-yl)-2-oxopropyl phosphate + H2O. Its pathway is amino-acid biosynthesis; L-histidine biosynthesis; L-histidine from 5-phospho-alpha-D-ribose 1-diphosphate: step 6/9. In Thermotoga petrophila (strain ATCC BAA-488 / DSM 13995 / JCM 10881 / RKU-1), this protein is Imidazoleglycerol-phosphate dehydratase.